Consider the following 312-residue polypeptide: DNA primase small subunit PriS (312 aa).

Active-site residues include D88, D90, and D215.

Belongs to the eukaryotic-type primase small subunit family. In terms of assembly, heterodimer of a small subunit (PriS) and a large subunit (PriL). Mg(2+) is required as a cofactor. The cofactor is Mn(2+).

Catalytic subunit of DNA primase, an RNA polymerase that catalyzes the synthesis of short RNA molecules used as primers for DNA polymerase during DNA replication. The small subunit contains the primase catalytic core and has DNA synthesis activity on its own. Binding to the large subunit stabilizes and modulates the activity, increasing the rate of DNA synthesis while decreasing the length of the DNA fragments, and conferring RNA synthesis capability. The DNA polymerase activity may enable DNA primase to also catalyze primer extension after primer synthesis. May also play a role in DNA repair. In Pyrobaculum aerophilum (strain ATCC 51768 / DSM 7523 / JCM 9630 / CIP 104966 / NBRC 100827 / IM2), this protein is DNA primase small subunit PriS.